The following is a 206-amino-acid chain: Ribosomal RNA small subunit methyltransferase G (206 aa).

S-adenosyl-L-methionine is bound by residues G74, L79, 125–126 (VE), and R140.

The protein belongs to the methyltransferase superfamily. RNA methyltransferase RsmG family.

It localises to the cytoplasm. The enzyme catalyses guanosine(527) in 16S rRNA + S-adenosyl-L-methionine = N(7)-methylguanosine(527) in 16S rRNA + S-adenosyl-L-homocysteine. In terms of biological role, specifically methylates the N7 position of guanine in position 527 of 16S rRNA. The sequence is that of Ribosomal RNA small subunit methyltransferase G from Shewanella sp. (strain MR-4).